The primary structure comprises 248 residues: Glutamine-binding periplasmic protein (248 aa).

A signal peptide spans 1–22 (MKSVLKVSLAALTLAFAVSSHA).

The protein belongs to the bacterial solute-binding protein 3 family.

It is found in the periplasm. In terms of biological role, involved in a glutamine-transport system GlnHPQ. In Escherichia coli O157:H7, this protein is Glutamine-binding periplasmic protein (glnH).